The following is a 419-amino-acid chain: Carboxypeptidase A1 (419 aa).

Residues 1–16 (MQGLLILSVLLGAALG) form the signal peptide. Positions 17 to 110 (KEDFVGHQVL…QEQMFASQSR (94 aa)) are cleaved as a propeptide — activation peptide. Positions 121 to 414 (TYHTLDEIYD…LGVLTIMEHT (294 aa)) constitute a Peptidase M14 domain. Zn(2+) is bound by residues His179 and Glu182. Residues 179 to 182 (HSRE), Arg237, and 254 to 255 (NR) each bind substrate. A disulfide bond links Cys248 and Cys271. His306 contacts Zn(2+). Substrate is bound by residues 307–308 (SY) and Tyr358. Residue Glu380 is the Proton donor/acceptor of the active site.

This sequence belongs to the peptidase M14 family. As to quaternary structure, monomer. May form a complex with proelastase 2. The cofactor is Zn(2+). As to expression, pancreas.

It is found in the secreted. The catalysed reaction is Release of a C-terminal amino acid, but little or no action with -Asp, -Glu, -Arg, -Lys or -Pro.. The enzyme catalyses leukotriene C4 + H2O = leukotriene F4 + glycine. Inhibited by interaction with the S.magnifica carboxypeptidase inhibitor SmCI. Functionally, carboxypeptidase that catalyzes the release of a C-terminal amino acid, but has little or no action with -Asp, -Glu, -Arg, -Lys or -Pro. Catalyzes the conversion of leukotriene C4 to leukotriene F4 via the hydrolysis of an amide bond. The protein is Carboxypeptidase A1 (CPA1) of Bos taurus (Bovine).